We begin with the raw amino-acid sequence, 258 residues long: L-aspartate dehydrogenase 1 (258 aa).

A121 and N181 together coordinate NAD(+). Residue H211 is part of the active site.

This sequence belongs to the L-aspartate dehydrogenase family.

It carries out the reaction L-aspartate + NADP(+) + H2O = oxaloacetate + NH4(+) + NADPH + H(+). It catalyses the reaction L-aspartate + NAD(+) + H2O = oxaloacetate + NH4(+) + NADH + H(+). It functions in the pathway cofactor biosynthesis; NAD(+) biosynthesis; iminoaspartate from L-aspartate (dehydrogenase route): step 1/1. In terms of biological role, specifically catalyzes the NAD or NADP-dependent dehydrogenation of L-aspartate to iminoaspartate. The sequence is that of L-aspartate dehydrogenase 1 from Bordetella parapertussis (strain 12822 / ATCC BAA-587 / NCTC 13253).